The chain runs to 172 residues: Probable calcium-binding protein CML28 (172 aa).

4 EF-hand domains span residues 1–36, 37–72, 95–130, and 133–168; these read MDSTELRKVFKMFDKNGDGRITKKELGESFKNFGIF, IPDDELDATMDKIDANGDGCVDVEEFGLLYRSILGD, DEDEGMREAFNVFDQNGDGFITVDELRSVLSSLGLK, and RTADDCRRMISMVDADGDGRVDFKEFKQMMRGGGFA. Ca(2+) is bound by residues D14, N16, D18, R20, E25, D50, N52, D54, C56, E61, D108, N110, D112, E119, D146, D148, D150, R152, and E157.

In terms of biological role, potential calcium sensor. This chain is Probable calcium-binding protein CML28 (CML28), found in Oryza sativa subsp. japonica (Rice).